The chain runs to 123 residues: Glycine cleavage system H protein (123 aa).

Residues 23–104 (HWLAGITDHA…PYDAWIFSFE (82 aa)) enclose the Lipoyl-binding domain. Lys64 carries the N6-lipoyllysine modification.

The protein belongs to the GcvH family. The glycine cleavage system is composed of four proteins: P, T, L and H. Requires (R)-lipoate as cofactor.

Functionally, the glycine cleavage system catalyzes the degradation of glycine. The H protein shuttles the methylamine group of glycine from the P protein to the T protein. In Methylobacillus flagellatus (strain ATCC 51484 / DSM 6875 / VKM B-1610 / KT), this protein is Glycine cleavage system H protein.